The sequence spans 1365 residues: Serine-aspartate repeat-containing protein D (1365 aa).

The first 35 residues, 1–35, serve as a signal peptide directing secretion; that stretch reads MLNRENKTAITRKGMVSNRLNKFSIRKYTVGTASI. The YSIRK-G/S signaling motif signature appears at 23 to 34; that stretch reads FSIRKYTVGTAS. The segment at 36 to 568 is ligand binding A region; it reads LVGTTLIFGL…NNQSGGAGQE (533 aa). A disordered region spans residues 54–185; the sequence is ESTNKELNEA…NKKVDAKTES (132 aa). 2 stretches are compositionally biased toward polar residues: residues 62 to 71 and 94 to 109; these read EATTSASDNQ and EMVS…NGNK. The segment covering 130–145 has biased composition (basic and acidic residues); that stretch reads KSDEQASPKSTNEDLN. Composition is skewed to polar residues over residues 146–155 and 163–173; these read TKQTISNQEA and NKSVVNAQPTN. Basic and acidic residues predominate over residues 174-183; that stretch reads EENKKVDAKT. 5 consecutive CNA-B domains span residues 569 to 680, 681 to 791, 792 to 901, 902 to 1012, and 1013 to 1123; these read VYKI…IYKP, KYNL…YKTP, KYNL…FYKP, TYNL…YKTP, and KYSL…EEDT. 3 disordered regions span residues 857–884, 972–991, and 1078–1341; these read ETPS…STTG, YTPT…NGLT, and EKPA…SNNA. Polar residues-rich tracts occupy residues 860–869 and 972–981; these read SGYTPTQVGS and YTPTSVTSGN. 2 stretches are compositionally biased toward acidic residues: residues 1091–1101 and 1118–1304; these read TEDDKDADGGE and YFEE…DSDS. The LPXTG sorting signal signature appears at 1328–1332; the sequence is LPETG. T1331 is modified (pentaglycyl murein peptidoglycan amidated threonine). Residues 1332–1365 constitute a propeptide, removed by sortase; it reads GNENSGSNNATLFGGLFAALGSLLLFGRRKKQNK.

It belongs to the serine-aspartate repeat-containing protein (SDr) family. As to quaternary structure, interacts with host DSG1; this interaction increases S.aureus adherence to keratinocytes.

The protein localises to the secreted. The protein resides in the cell wall. Functionally, cell surface-associated calcium-binding protein which plays an important role in adhesion and pathogenesis. Mediates interactions with components of the extracellular matrix such as host DSG1 to promote bacterial adhesion to host cells. Contributes to the resistance to killing by innate immune components such as neutrophils present in blood and thus attenuates bacterial clearance. The sequence is that of Serine-aspartate repeat-containing protein D (sdrD) from Staphylococcus aureus (strain MSSA476).